The sequence spans 264 residues: tRNA (guanine-N(1)-)-methyltransferase (264 aa).

Residues Gly-125 and 145–150 each bind S-adenosyl-L-methionine; that span reads LGDFVL.

Belongs to the RNA methyltransferase TrmD family. Homodimer.

It localises to the cytoplasm. The catalysed reaction is guanosine(37) in tRNA + S-adenosyl-L-methionine = N(1)-methylguanosine(37) in tRNA + S-adenosyl-L-homocysteine + H(+). In terms of biological role, specifically methylates guanosine-37 in various tRNAs. This Burkholderia lata (strain ATCC 17760 / DSM 23089 / LMG 22485 / NCIMB 9086 / R18194 / 383) protein is tRNA (guanine-N(1)-)-methyltransferase.